The primary structure comprises 400 residues: DDEADRLLKQGYTDLIERLHKQIPKITSDGCRLQMIVCSATLHAFEVKKMAERLMHFPTWGDLKGEDAVPETVHHVVCMVDPHTDSSWQQLRQPIHTDGVHDHDNVHPTNQSPETFSQAVKLLKGEYCIRAIDQHKMDRAIIFCRTKQDCDNLEQHLSQRGGQRFSCVCLHGDRKPQERKQNLEMFKRQEVKFLICTDVAARGLDITGLPFSKDLKYLSENTLNFPNLAVINITLPDDKSNYVHRIGRVGRPESMGLAISLVSTVPEKVWYHGEWCKTRGRSGSCIWYNEPNLLAEVEDHLNITIQQVVKSLDVPVNDFDGKVVYGQKNLNMGTGYEDHVEQLGPTVRKQTDLELQSQSLFLKRLKRLNWFDFGLLHDPKYFHGYEYIKYINKLTLKSCV.

The Helicase ATP-binding domain maps to 1–60; sequence DDEADRLLKQGYTDLIERLHKQIPKITSDGCRLQMIVCSATLHAFEVKKMAERLMHFPTW. Residues 2-5 carry the DEAD box motif; sequence DEAD. Residues 115–316 enclose the Helicase C-terminal domain; the sequence is TFSQAVKLLK…QVVKSLDVPV (202 aa).

Belongs to the DEAD box helicase family. DDX1 subfamily.

It carries out the reaction ATP + H2O = ADP + phosphate + H(+). In terms of biological role, acts as an ATP-dependent RNA helicase, able to unwind both RNA-RNA and RNA-DNA duplexes. Possesses 5' single-stranded RNA overhang nuclease activity. The protein is ATP-dependent RNA helicase Ddx1 (Ddx1) of Drosophila virilis (Fruit fly).